A 152-amino-acid polypeptide reads, in one-letter code: Deoxyuridine 5'-triphosphate nucleotidohydrolase (152 aa).

Residues 71–73 (RSG), Asn84, 88–90 (LID), and Met98 contribute to the substrate site.

It belongs to the dUTPase family. Mg(2+) is required as a cofactor.

It catalyses the reaction dUTP + H2O = dUMP + diphosphate + H(+). It functions in the pathway pyrimidine metabolism; dUMP biosynthesis; dUMP from dCTP (dUTP route): step 2/2. Its function is as follows. This enzyme is involved in nucleotide metabolism: it produces dUMP, the immediate precursor of thymidine nucleotides and it decreases the intracellular concentration of dUTP so that uracil cannot be incorporated into DNA. The polypeptide is Deoxyuridine 5'-triphosphate nucleotidohydrolase (Shewanella loihica (strain ATCC BAA-1088 / PV-4)).